Here is a 201-residue protein sequence, read N- to C-terminus: Dephospho-CoA kinase (201 aa).

Residues 4–201 (IIGITGGIAS…LEGGRQDDRD (198 aa)) form the DPCK domain. 12–17 (ASGKST) contributes to the ATP binding site.

Belongs to the CoaE family.

Its subcellular location is the cytoplasm. The enzyme catalyses 3'-dephospho-CoA + ATP = ADP + CoA + H(+). Its pathway is cofactor biosynthesis; coenzyme A biosynthesis; CoA from (R)-pantothenate: step 5/5. Functionally, catalyzes the phosphorylation of the 3'-hydroxyl group of dephosphocoenzyme A to form coenzyme A. This Streptococcus pneumoniae (strain ATCC BAA-255 / R6) protein is Dephospho-CoA kinase.